The chain runs to 212 residues: Large ribosomal subunit protein uL3 (212 aa).

An N5-methylglutamine modification is found at Gln-153.

The protein belongs to the universal ribosomal protein uL3 family. Part of the 50S ribosomal subunit. Forms a cluster with proteins L14 and L19. Post-translationally, methylated by PrmB.

In terms of biological role, one of the primary rRNA binding proteins, it binds directly near the 3'-end of the 23S rRNA, where it nucleates assembly of the 50S subunit. This chain is Large ribosomal subunit protein uL3, found in Marinobacter nauticus (strain ATCC 700491 / DSM 11845 / VT8) (Marinobacter aquaeolei).